Consider the following 385-residue polypeptide: uncharacterized protein (385 aa).

Transmembrane regions (helical) follow at residues 17–37 (ILII…FIFT), 72–92 (TELM…WFLL), 107–127 (WILK…KCIT), 155–175 (ICLI…FYII), 191–211 (WIQA…LVLL), 295–315 (AFPS…FYFL), 326–346 (ITLL…IVVN), and 354–374 (ITFT…FNSF).

Its subcellular location is the membrane. This is an uncharacterized protein from Mycoplasma capricolum subsp. capricolum (strain California kid / ATCC 27343 / NCTC 10154).